We begin with the raw amino-acid sequence, 45 residues long: Large ribosomal subunit protein bL34 (45 aa).

Belongs to the bacterial ribosomal protein bL34 family.

This chain is Large ribosomal subunit protein bL34, found in Prochlorococcus marinus (strain MIT 9313).